Consider the following 441-residue polypeptide: Amino-acid acetyltransferase (441 aa).

The N-acetyltransferase domain maps to 295–434 (EQVRRATIND…QELYNYQRRS (140 aa)).

This sequence belongs to the acetyltransferase family. ArgA subfamily. As to quaternary structure, homohexamer.

The protein localises to the cytoplasm. The enzyme catalyses L-glutamate + acetyl-CoA = N-acetyl-L-glutamate + CoA + H(+). It participates in amino-acid biosynthesis; L-arginine biosynthesis; N(2)-acetyl-L-ornithine from L-glutamate: step 1/4. In Yersinia enterocolitica serotype O:8 / biotype 1B (strain NCTC 13174 / 8081), this protein is Amino-acid acetyltransferase.